The primary structure comprises 196 residues: Large ribosomal subunit protein uL18 (196 aa).

The protein belongs to the universal ribosomal protein uL18 family. In terms of assembly, part of the 50S ribosomal subunit. Contacts the 5S and 23S rRNAs.

This is one of the proteins that bind and probably mediate the attachment of the 5S RNA into the large ribosomal subunit, where it forms part of the central protuberance. The sequence is that of Large ribosomal subunit protein uL18 from Desulfurococcus amylolyticus (strain DSM 18924 / JCM 16383 / VKM B-2413 / 1221n) (Desulfurococcus kamchatkensis).